A 241-amino-acid polypeptide reads, in one-letter code: Probable WRKY transcription factor 63 (241 aa).

A disordered region spans residues 56–79 (NSPNRQPHHESSSRDMAGLVPQRS). A DNA-binding region (WRKY) is located at residues 97 to 165 (SPNPRLDDGF…YLGQHTCKAF (69 aa)).

It belongs to the WRKY group III family.

It localises to the nucleus. In terms of biological role, transcription factor. Interacts specifically with the W box (5'-(T)TGAC[CT]-3'), a frequently occurring elicitor-responsive cis-acting element. This is Probable WRKY transcription factor 63 (WRKY63) from Arabidopsis thaliana (Mouse-ear cress).